The sequence spans 78 residues: D-alanyl carrier protein (78 aa).

A Carrier domain is found at methionine 1–lysine 78. O-(pantetheine 4'-phosphoryl)serine is present on serine 36.

The protein belongs to the DltC family. 4'-phosphopantetheine is transferred from CoA to a specific serine of apo-DCP.

Its subcellular location is the cytoplasm. It functions in the pathway cell wall biogenesis; lipoteichoic acid biosynthesis. In terms of biological role, carrier protein involved in the D-alanylation of lipoteichoic acid (LTA). The loading of thioester-linked D-alanine onto DltC is catalyzed by D-alanine--D-alanyl carrier protein ligase DltA. The DltC-carried D-alanyl group is further transferred to cell membrane phosphatidylglycerol (PG) by forming an ester bond, probably catalyzed by DltD. D-alanylation of LTA plays an important role in modulating the properties of the cell wall in Gram-positive bacteria, influencing the net charge of the cell wall. The protein is D-alanyl carrier protein of Bacillus velezensis (strain DSM 23117 / BGSC 10A6 / LMG 26770 / FZB42) (Bacillus amyloliquefaciens subsp. plantarum).